We begin with the raw amino-acid sequence, 230 residues long: ATP synthase subunit a (230 aa).

5 consecutive transmembrane segments (helical) span residues Leu-17 to Ala-37, Ile-78 to Ile-98, Asp-107 to Ile-127, Leu-165 to Val-187, and Glu-198 to Ile-218.

It belongs to the ATPase A chain family. As to quaternary structure, F-type ATPases have 2 components, CF(1) - the catalytic core - and CF(0) - the membrane proton channel. CF(1) has five subunits: alpha(3), beta(3), gamma(1), delta(1), epsilon(1). CF(0) has three main subunits: a(1), b(2) and c(9-12). The alpha and beta chains form an alternating ring which encloses part of the gamma chain. CF(1) is attached to CF(0) by a central stalk formed by the gamma and epsilon chains, while a peripheral stalk is formed by the delta and b chains.

Its subcellular location is the cell inner membrane. Its function is as follows. Key component of the proton channel; it plays a direct role in the translocation of protons across the membrane. The protein is ATP synthase subunit a of Legionella pneumophila subsp. pneumophila (strain Philadelphia 1 / ATCC 33152 / DSM 7513).